Reading from the N-terminus, the 359-residue chain is S-adenosylmethionine:tRNA ribosyltransferase-isomerase (359 aa).

Belongs to the QueA family. In terms of assembly, monomer.

It is found in the cytoplasm. It carries out the reaction 7-aminomethyl-7-carbaguanosine(34) in tRNA + S-adenosyl-L-methionine = epoxyqueuosine(34) in tRNA + adenine + L-methionine + 2 H(+). The protein operates within tRNA modification; tRNA-queuosine biosynthesis. Its function is as follows. Transfers and isomerizes the ribose moiety from AdoMet to the 7-aminomethyl group of 7-deazaguanine (preQ1-tRNA) to give epoxyqueuosine (oQ-tRNA). The protein is S-adenosylmethionine:tRNA ribosyltransferase-isomerase of Alcanivorax borkumensis (strain ATCC 700651 / DSM 11573 / NCIMB 13689 / SK2).